The sequence spans 312 residues: Glutaminase (312 aa).

7 residues coordinate substrate: Ser-67, Asn-118, Glu-162, Asn-169, Tyr-193, Tyr-245, and Val-263.

This sequence belongs to the glutaminase family. In terms of assembly, homotetramer.

The enzyme catalyses L-glutamine + H2O = L-glutamate + NH4(+). The protein is Glutaminase of Bordetella avium (strain 197N).